A 174-amino-acid chain; its full sequence is 3-hydroxydecanoyl-[acyl-carrier-protein] dehydratase (174 aa).

H71 is a catalytic residue.

Belongs to the thioester dehydratase family. FabA subfamily. In terms of assembly, homodimer.

It is found in the cytoplasm. The catalysed reaction is a (3R)-hydroxyacyl-[ACP] = a (2E)-enoyl-[ACP] + H2O. The enzyme catalyses (3R)-hydroxydecanoyl-[ACP] = (2E)-decenoyl-[ACP] + H2O. It carries out the reaction (2E)-decenoyl-[ACP] = (3Z)-decenoyl-[ACP]. Its pathway is lipid metabolism; fatty acid biosynthesis. In terms of biological role, necessary for the introduction of cis unsaturation into fatty acids. Catalyzes the dehydration of (3R)-3-hydroxydecanoyl-ACP to E-(2)-decenoyl-ACP and then its isomerization to Z-(3)-decenoyl-ACP. Can catalyze the dehydratase reaction for beta-hydroxyacyl-ACPs with saturated chain lengths up to 16:0, being most active on intermediate chain length. The protein is 3-hydroxydecanoyl-[acyl-carrier-protein] dehydratase of Nitrobacter winogradskyi (strain ATCC 25391 / DSM 10237 / CIP 104748 / NCIMB 11846 / Nb-255).